The following is a 188-amino-acid chain: Protein GrpE (188 aa).

Residues 1 to 22 (MADEQTLDTQNLDANQAPEASG) form a disordered region.

This sequence belongs to the GrpE family. In terms of assembly, homodimer.

It localises to the cytoplasm. In terms of biological role, participates actively in the response to hyperosmotic and heat shock by preventing the aggregation of stress-denatured proteins, in association with DnaK and GrpE. It is the nucleotide exchange factor for DnaK and may function as a thermosensor. Unfolded proteins bind initially to DnaJ; upon interaction with the DnaJ-bound protein, DnaK hydrolyzes its bound ATP, resulting in the formation of a stable complex. GrpE releases ADP from DnaK; ATP binding to DnaK triggers the release of the substrate protein, thus completing the reaction cycle. Several rounds of ATP-dependent interactions between DnaJ, DnaK and GrpE are required for fully efficient folding. This Pseudomonas fluorescens (strain ATCC BAA-477 / NRRL B-23932 / Pf-5) protein is Protein GrpE.